A 369-amino-acid chain; its full sequence is Probable dual-specificity RNA methyltransferase RlmN (369 aa).

Glu108 (proton acceptor) is an active-site residue. The 239-residue stretch at 114 to 352 (YPDRATLCIS…CTVRDTKGQE (239 aa)) folds into the Radical SAM core domain. Cys121 and Cys357 are oxidised to a cystine. [4Fe-4S] cluster-binding residues include Cys128, Cys132, and Cys135. S-adenosyl-L-methionine-binding positions include 178-179 (GE), Ser212, 235-237 (SLH), and Asn314. Cys357 (S-methylcysteine intermediate) is an active-site residue.

Belongs to the radical SAM superfamily. RlmN family. [4Fe-4S] cluster serves as cofactor.

Its subcellular location is the cytoplasm. It catalyses the reaction adenosine(2503) in 23S rRNA + 2 reduced [2Fe-2S]-[ferredoxin] + 2 S-adenosyl-L-methionine = 2-methyladenosine(2503) in 23S rRNA + 5'-deoxyadenosine + L-methionine + 2 oxidized [2Fe-2S]-[ferredoxin] + S-adenosyl-L-homocysteine. The catalysed reaction is adenosine(37) in tRNA + 2 reduced [2Fe-2S]-[ferredoxin] + 2 S-adenosyl-L-methionine = 2-methyladenosine(37) in tRNA + 5'-deoxyadenosine + L-methionine + 2 oxidized [2Fe-2S]-[ferredoxin] + S-adenosyl-L-homocysteine. Its function is as follows. Specifically methylates position 2 of adenine 2503 in 23S rRNA and position 2 of adenine 37 in tRNAs. The chain is Probable dual-specificity RNA methyltransferase RlmN from Corynebacterium efficiens (strain DSM 44549 / YS-314 / AJ 12310 / JCM 11189 / NBRC 100395).